A 131-amino-acid chain; its full sequence is Large ribosomal subunit protein bL17 (131 aa).

It belongs to the bacterial ribosomal protein bL17 family. Part of the 50S ribosomal subunit. Contacts protein L32.

In Methylacidiphilum infernorum (isolate V4) (Methylokorus infernorum (strain V4)), this protein is Large ribosomal subunit protein bL17.